We begin with the raw amino-acid sequence, 156 residues long: Arginine repressor (156 aa).

The protein belongs to the ArgR family.

The protein resides in the cytoplasm. The protein operates within amino-acid biosynthesis; L-arginine biosynthesis [regulation]. Its function is as follows. Regulates arginine biosynthesis genes. The protein is Arginine repressor of Vibrio campbellii (strain ATCC BAA-1116).